The sequence spans 266 residues: 26 kDa endochitinase 2 (266 aa).

An N-terminal signal peptide occupies residues 1-23 (MRSLAVVVAVVATVAMAIGTARG). Disulfide bonds link Cys46-Cys108, Cys120-Cys128, and Cys227-Cys259. Glu90 acts as the Proton donor in catalysis.

The protein belongs to the glycosyl hydrolase 19 family. Chitinase class II subfamily.

The catalysed reaction is Random endo-hydrolysis of N-acetyl-beta-D-glucosaminide (1-&gt;4)-beta-linkages in chitin and chitodextrins.. Functionally, defense against chitin-containing fungal pathogens. This is 26 kDa endochitinase 2 from Hordeum vulgare (Barley).